Reading from the N-terminus, the 330-residue chain is Polyprenol dehydrogenase (330 aa).

NAD(+) contacts are provided by I55, Y208, K212, and T245. Catalysis depends on Y208, which acts as the Proton acceptor.

The protein belongs to the short-chain dehydrogenases/reductases (SDR) family. Widely expressed. Highly expressed in the pancreas.

It localises to the lipid droplet. The protein resides in the secreted. The catalysed reaction is a di-trans,poly-cis-polyprenol + NAD(+) = a di-trans,poly-cis-polyprenal + NADH + H(+). The enzyme catalyses a di-trans,poly-cis-polyprenol + NADP(+) = a di-trans,poly-cis-polyprenal + NADPH + H(+). It carries out the reaction a di-trans,poly-cis-dolichol + NADP(+) = a di-trans,poly-cis-dolichal + NADPH + H(+). It catalyses the reaction a di-trans,poly-cis-dolichol + NAD(+) = a di-trans,poly-cis-dolichal + NADH + H(+). The protein operates within protein modification; protein glycosylation. Oxidoreductase that plays a key role in early steps of protein N-linked glycosylation by mediating two non-consecutive steps in dolichol biosynthesis. Acts both as a NAD(+)-dependent dehydrogenase and as a NADPH-dependent reductase during the conversion of polyprenol into dolichol. First catalyzes the NAD(+)-dependent dehydrogenation of polyprenol into polyprenal; polyprenal is then reduced into dolichal by SRD5A3. It then catalyzes the NADPH-dependent reduction of dolichal into dolichol. May also acts as a positive regulator of starvation-induced autophagy. The chain is Polyprenol dehydrogenase from Homo sapiens (Human).